Consider the following 208-residue polypeptide: dTTP/UTP pyrophosphatase (208 aa).

The interval D28–L48 is disordered. Residue D79 is the Proton acceptor of the active site.

It belongs to the Maf family. YhdE subfamily. It depends on a divalent metal cation as a cofactor.

The protein resides in the cytoplasm. The enzyme catalyses dTTP + H2O = dTMP + diphosphate + H(+). It carries out the reaction UTP + H2O = UMP + diphosphate + H(+). Nucleoside triphosphate pyrophosphatase that hydrolyzes dTTP and UTP. May have a dual role in cell division arrest and in preventing the incorporation of modified nucleotides into cellular nucleic acids. The polypeptide is dTTP/UTP pyrophosphatase (Brucella abortus (strain 2308)).